A 301-amino-acid polypeptide reads, in one-letter code: Nucleotide-binding protein Mb1456 (301 aa).

24–31 (GLSGAGRG) is an ATP binding site. 75–78 (DVRS) provides a ligand contact to GTP.

The protein belongs to the RapZ-like family.

Functionally, displays ATPase and GTPase activities. This is Nucleotide-binding protein Mb1456 from Mycobacterium bovis (strain ATCC BAA-935 / AF2122/97).